A 309-amino-acid chain; its full sequence is Aspartate carbamoyltransferase catalytic subunit (309 aa).

Arg-49 and Thr-50 together coordinate carbamoyl phosphate. Residue Lys-77 coordinates L-aspartate. Carbamoyl phosphate contacts are provided by Arg-99, His-127, and Gln-130. L-aspartate-binding residues include Arg-160 and Arg-211. Ala-252 and Pro-253 together coordinate carbamoyl phosphate.

The protein belongs to the aspartate/ornithine carbamoyltransferase superfamily. ATCase family. Heterododecamer (2C3:3R2) of six catalytic PyrB chains organized as two trimers (C3), and six regulatory PyrI chains organized as three dimers (R2).

It catalyses the reaction carbamoyl phosphate + L-aspartate = N-carbamoyl-L-aspartate + phosphate + H(+). It functions in the pathway pyrimidine metabolism; UMP biosynthesis via de novo pathway; (S)-dihydroorotate from bicarbonate: step 2/3. Catalyzes the condensation of carbamoyl phosphate and aspartate to form carbamoyl aspartate and inorganic phosphate, the committed step in the de novo pyrimidine nucleotide biosynthesis pathway. The protein is Aspartate carbamoyltransferase catalytic subunit of Geobacillus sp. (strain WCH70).